Consider the following 557-residue polypeptide: Chaperonin GroEL 1 (557 aa).

ATP contacts are provided by residues 29 to 32 (TLGP), lysine 50, 86 to 90 (DGTTT), glycine 416, and aspartate 495.

The protein belongs to the chaperonin (HSP60) family. As to quaternary structure, forms a cylinder of 14 subunits composed of two heptameric rings stacked back-to-back. Interacts with the co-chaperonin GroES.

The protein resides in the cytoplasm. It carries out the reaction ATP + H2O + a folded polypeptide = ADP + phosphate + an unfolded polypeptide.. Together with its co-chaperonin GroES, plays an essential role in assisting protein folding. The GroEL-GroES system forms a nano-cage that allows encapsulation of the non-native substrate proteins and provides a physical environment optimized to promote and accelerate protein folding. The polypeptide is Chaperonin GroEL 1 (Protochlamydia amoebophila (strain UWE25)).